The primary structure comprises 146 residues: UPF0260 protein Sden_1632 (146 aa).

Belongs to the UPF0260 family.

The sequence is that of UPF0260 protein Sden_1632 from Shewanella denitrificans (strain OS217 / ATCC BAA-1090 / DSM 15013).